The primary structure comprises 397 residues: MGSFDEVSHDTGYEDYITFLKRRIRQLELQVRTLEADKERLERELSRLRTEMSRLRQPPAFAGTVIEVLDDDRAIVQNYNGPRFVVRIAPWIERDKLKPGSRVALDQRTMAIVELLPTEKDPSVLGFEVIEKPRVTYQDIGGLERQLAELREAVELPLKHPELFEKVGIEPPKGVLLYGPPGCGKTLMAKAVANHVNATFIRVVGSELVRKFIGEGARLVHELFEMAKEKAPTIIFIDEIDAIGAKRMDETTGGEREVNRTLMQLLAEMDGFDPRGNVKVIAATNRPDILDPALLRPGRFDRLIEVPLPDFRGRLEILKVHTRKMNLRNVDLSIIADITEGASGADLKAIATEAGMFAIRDRRTYVTQEDFLKAVDKVLGAEKRLAQAIAMHEVMYG.

Positions 12–58 form a coiled coil; that stretch reads GYEDYITFLKRRIRQLELQVRTLEADKERLERELSRLRTEMSRLRQP. ATP-binding positions include 182-187 and histidine 321; that span reads GCGKTL. The docks into pockets in the proteasome alpha-ring to cause gate opening stretch occupies residues 395–397; that stretch reads MYG.

This sequence belongs to the AAA ATPase family. As to quaternary structure, homohexamer. The hexameric complex has a two-ring architecture resembling a top hat that caps the 20S proteasome core at one or both ends. Upon ATP-binding, the C-terminus of PAN interacts with the alpha-rings of the proteasome core by binding to the intersubunit pockets.

Its subcellular location is the cytoplasm. Its function is as follows. ATPase which is responsible for recognizing, binding, unfolding and translocation of substrate proteins into the archaeal 20S proteasome core particle. Is essential for opening the gate of the 20S proteasome via an interaction with its C-terminus, thereby allowing substrate entry and access to the site of proteolysis. Thus, the C-termini of the proteasomal ATPase function like a 'key in a lock' to induce gate opening and therefore regulate proteolysis. Unfolding activity requires energy from ATP hydrolysis, whereas ATP binding alone promotes ATPase-20S proteasome association which triggers gate opening, and supports translocation of unfolded substrates. This chain is Proteasome-activating nucleotidase, found in Thermococcus gammatolerans (strain DSM 15229 / JCM 11827 / EJ3).